Consider the following 94-residue polypeptide: Co-chaperonin GroES (94 aa).

This sequence belongs to the GroES chaperonin family. As to quaternary structure, heptamer of 7 subunits arranged in a ring. Interacts with the chaperonin GroEL.

The protein localises to the cytoplasm. Its function is as follows. Together with the chaperonin GroEL, plays an essential role in assisting protein folding. The GroEL-GroES system forms a nano-cage that allows encapsulation of the non-native substrate proteins and provides a physical environment optimized to promote and accelerate protein folding. GroES binds to the apical surface of the GroEL ring, thereby capping the opening of the GroEL channel. In Clostridium beijerinckii (strain ATCC 51743 / NCIMB 8052) (Clostridium acetobutylicum), this protein is Co-chaperonin GroES.